Consider the following 142-residue polypeptide: 3-hydroxyacyl-[acyl-carrier-protein] dehydratase FabZ (142 aa).

Residue H49 is part of the active site.

It belongs to the thioester dehydratase family. FabZ subfamily.

It localises to the cytoplasm. The catalysed reaction is a (3R)-hydroxyacyl-[ACP] = a (2E)-enoyl-[ACP] + H2O. In terms of biological role, involved in unsaturated fatty acids biosynthesis. Catalyzes the dehydration of short chain beta-hydroxyacyl-ACPs and long chain saturated and unsaturated beta-hydroxyacyl-ACPs. This Deinococcus geothermalis (strain DSM 11300 / CIP 105573 / AG-3a) protein is 3-hydroxyacyl-[acyl-carrier-protein] dehydratase FabZ.